Consider the following 358-residue polypeptide: Methylthioribose-1-phosphate isomerase (358 aa).

Residues 54–56 and glutamine 205 contribute to the substrate site; that span reads CGA. Aspartate 246 functions as the Proton donor in the catalytic mechanism. 256-257 provides a ligand contact to substrate; the sequence is NQ.

The protein belongs to the eIF-2B alpha/beta/delta subunits family. MtnA subfamily.

It catalyses the reaction 5-(methylsulfanyl)-alpha-D-ribose 1-phosphate = 5-(methylsulfanyl)-D-ribulose 1-phosphate. The protein operates within amino-acid biosynthesis; L-methionine biosynthesis via salvage pathway; L-methionine from S-methyl-5-thio-alpha-D-ribose 1-phosphate: step 1/6. In terms of biological role, catalyzes the interconversion of methylthioribose-1-phosphate (MTR-1-P) into methylthioribulose-1-phosphate (MTRu-1-P). The chain is Methylthioribose-1-phosphate isomerase from Pseudomonas fluorescens (strain ATCC BAA-477 / NRRL B-23932 / Pf-5).